The following is a 155-amino-acid chain: Troponin C, body wall muscle (155 aa).

V1 is subject to N-acetylvaline. EF-hand domains lie at 7–43, 44–79, 88–121, and 122–155; these read DEKSQFRAAFDIFVADAKDGTISSKELGKVMKMLGQN, PTEKDLQEMIEEVDIDGSGTIDFEEFCLMMYRQMQA, REEKELSEAFRLFDLDGDGIGDELKAALDGTGEN, and VETWEVDEMMADGDKNHDSQIDYEEWVTMMKFVQ. Residues D57, D59, S61, T63, and E68 each contribute to the Ca(2+) site. Positions 135, 137, 139, 141, and 146 each coordinate Ca(2+).

It belongs to the troponin C family.

In terms of biological role, troponin is the central regulatory protein of muscle contraction. Tn consists of three components: Tn-I which is the inhibitor of actomyosin ATPase, Tn-T which contains the binding site for tropomyosin and Tn-C. The binding of calcium to Tn-C abolishes the inhibitory action of Tn on actin filaments. This chain is Troponin C, body wall muscle, found in Halocynthia roretzi (Sea squirt).